Here is a 377-residue protein sequence, read N- to C-terminus: uncharacterized protein (377 aa).

The segment at 1–25 is disordered; sequence MAQQTNVAGQKTEKQRKAPFRADHV. Positions 11–24 are enriched in basic and acidic residues; the sequence is KTEKQRKAPFRADH.

This sequence to B.subtilis YxjG.

This is an uncharacterized protein from Bacillus subtilis (strain 168).